The chain runs to 400 residues: Phosphoglycerate kinase (400 aa).

Substrate is bound by residues 23–25 (DLN), Arg38, 61–64 (HFGR), Arg120, and Arg153. ATP-binding positions include Lys203, Glu325, and 355–358 (GGDT).

It belongs to the phosphoglycerate kinase family. As to quaternary structure, monomer.

It is found in the cytoplasm. The catalysed reaction is (2R)-3-phosphoglycerate + ATP = (2R)-3-phospho-glyceroyl phosphate + ADP. It participates in carbohydrate degradation; glycolysis; pyruvate from D-glyceraldehyde 3-phosphate: step 2/5. The polypeptide is Phosphoglycerate kinase (Methylorubrum populi (strain ATCC BAA-705 / NCIMB 13946 / BJ001) (Methylobacterium populi)).